A 398-amino-acid polypeptide reads, in one-letter code: Meiosis-specific protein SPO11 (398 aa).

The 136-residue stretch at 40 to 175 (CSNADVLAHI…LNIIPAQKGL (136 aa)) folds into the Topo IIA-type catalytic domain. The active-site O-(5'-phospho-DNA)-tyrosine intermediate is the tyrosine 135. Mg(2+) is bound by residues glutamate 233 and aspartate 288.

It belongs to the TOP6A family. It depends on Mg(2+) as a cofactor.

It localises to the nucleus. The protein localises to the chromosome. It carries out the reaction ATP-dependent breakage, passage and rejoining of double-stranded DNA.. In terms of biological role, required for meiotic recombination. Mediates DNA cleavage that forms the double-strand breaks (DSB) that initiate meiotic recombination. The action of SPO11 is important in setting off a regulatory chain of events encompassing 5' to 3' resection. When there are no SPO11-DSBs, resection of a site specific VDE-DSB takes place but it is faster than in wild-type meiosis and increases the risk of uncovering flanking homology. In Saccharomyces cerevisiae (strain ATCC 204508 / S288c) (Baker's yeast), this protein is Meiosis-specific protein SPO11 (SPO11).